Consider the following 879-residue polypeptide: DNA mismatch repair protein MutS (879 aa).

629–636 lines the ATP pocket; the sequence is GPNMAGKS.

The protein belongs to the DNA mismatch repair MutS family.

In terms of biological role, this protein is involved in the repair of mismatches in DNA. It is possible that it carries out the mismatch recognition step. This protein has a weak ATPase activity. The chain is DNA mismatch repair protein MutS from Ruegeria sp. (strain TM1040) (Silicibacter sp.).